A 332-amino-acid chain; its full sequence is Nucleotide-binding protein RC1_2868 (332 aa).

The interval 1–27 (MTGQPLTMETAAGADAGTGAATHPADG) is disordered. Over residues 10-22 (TAAGADAGTGAAT) the composition is skewed to low complexity. 36-43 (GMSGGGLS) serves as a coordination point for ATP. 82 to 85 (DSRT) is a binding site for GTP. 2 stretches are compositionally biased toward basic and acidic residues: residues 302–312 (GHRDLDRRHPA) and 322–332 (VASRETPEEHR). The segment at 302 to 332 (GHRDLDRRHPAPEPAPPWREVASRETPEEHR) is disordered.

The protein belongs to the RapZ-like family.

Displays ATPase and GTPase activities. This Rhodospirillum centenum (strain ATCC 51521 / SW) protein is Nucleotide-binding protein RC1_2868.